The chain runs to 302 residues: 33 kDa chaperonin (302 aa).

2 cysteine pairs are disulfide-bonded: C247-C249 and C280-C283.

The protein belongs to the HSP33 family. In terms of processing, under oxidizing conditions two disulfide bonds are formed involving the reactive cysteines. Under reducing conditions zinc is bound to the reactive cysteines and the protein is inactive.

It is found in the cytoplasm. Its function is as follows. Redox regulated molecular chaperone. Protects both thermally unfolding and oxidatively damaged proteins from irreversible aggregation. Plays an important role in the bacterial defense system toward oxidative stress. The polypeptide is 33 kDa chaperonin (Prochlorococcus marinus (strain MIT 9301)).